Consider the following 223-residue polypeptide: UPF0502 protein Sbal223_2520 (223 aa).

It belongs to the UPF0502 family.

This Shewanella baltica (strain OS223) protein is UPF0502 protein Sbal223_2520.